The primary structure comprises 425 residues: Sucrose-phosphatase 1 (425 aa).

The protein belongs to the sucrose phosphatase family. Homodimer. Mg(2+) is required as a cofactor.

The enzyme catalyses sucrose 6(F)-phosphate + H2O = sucrose + phosphate. It functions in the pathway glycan biosynthesis; sucrose biosynthesis; sucrose from D-fructose 6-phosphate and UDP-alpha-D-glucose: step 2/2. Its activity is regulated as follows. Inhibited by EDTA. Functionally, catalyzes the final step of sucrose synthesis. This chain is Sucrose-phosphatase 1 (SPP1), found in Nicotiana tabacum (Common tobacco).